Here is a 172-residue protein sequence, read N- to C-terminus: MIKLTQILTEVPSVDAKVCLTMVQRTKSRLRIVLEDGQDAGLLLPRGHILHHGSLLSTDDGFVVEVVAAKEQVSTARSDNPTLFAKGCYHLGNRHVPLQVEAGWCRYQHDYVLDEMLIGLGLQVTVENEAFQPEAGAYGGTTGGHSHGDAYDDSLEKASHEHAHGHPHKHEH.

Belongs to the UreE family.

It localises to the cytoplasm. In terms of biological role, involved in urease metallocenter assembly. Binds nickel. Probably functions as a nickel donor during metallocenter assembly. This chain is Urease accessory protein UreE, found in Shewanella halifaxensis (strain HAW-EB4).